The following is an 88-amino-acid chain: Small ribosomal subunit protein uS15 (88 aa).

This sequence belongs to the universal ribosomal protein uS15 family. In terms of assembly, part of the 30S ribosomal subunit. Forms a bridge to the 50S subunit in the 70S ribosome, contacting the 23S rRNA.

One of the primary rRNA binding proteins, it binds directly to 16S rRNA where it helps nucleate assembly of the platform of the 30S subunit by binding and bridging several RNA helices of the 16S rRNA. In terms of biological role, forms an intersubunit bridge (bridge B4) with the 23S rRNA of the 50S subunit in the ribosome. This chain is Small ribosomal subunit protein uS15, found in Borreliella afzelii (strain PKo) (Borrelia afzelii).